The chain runs to 146 residues: Cytochrome b5 type B (146 aa).

A propeptide spanning residues 1-11 (MATPEASGSGE) is cleaved from the precursor. The residue at position 19 (Ser-19) is a Phosphoserine. Positions 20-96 (VTYYRLEEVA…LKQYYIGDVH (77 aa)) constitute a Cytochrome b5 heme-binding domain. Lys-30 is modified (N6-acetyllysine). Ser-33 is subject to Phosphoserine. Residues His-55 and His-79 each coordinate heme. A Phosphoserine modification is found at Ser-80. A helical membrane pass occupies residues 119–136 (WAYWFVPIVGAILIGFLY).

This sequence belongs to the cytochrome b5 family. In terms of assembly, component of a complex composed of cytochrome b5, NADH-cytochrome b5 reductase (CYB5R3) and MTARC2.

It localises to the mitochondrion outer membrane. In terms of biological role, cytochrome b5 is a membrane-bound hemoprotein functioning as an electron carrier for several membrane-bound oxygenases. The sequence is that of Cytochrome b5 type B (Cyb5b) from Mus musculus (Mouse).